A 282-amino-acid chain; its full sequence is Pantothenate synthetase (282 aa).

30–37 (MGNLHQGH) lines the ATP pocket. The active-site Proton donor is H37. Position 61 (Q61) interacts with (R)-pantoate. Q61 lines the beta-alanine pocket. 149-152 (GKKD) is a binding site for ATP. Residue Q155 coordinates (R)-pantoate. Residues I178 and 186–189 (MSSR) contribute to the ATP site.

The protein belongs to the pantothenate synthetase family. As to quaternary structure, homodimer.

The protein resides in the cytoplasm. The enzyme catalyses (R)-pantoate + beta-alanine + ATP = (R)-pantothenate + AMP + diphosphate + H(+). The protein operates within cofactor biosynthesis; (R)-pantothenate biosynthesis; (R)-pantothenate from (R)-pantoate and beta-alanine: step 1/1. Its function is as follows. Catalyzes the condensation of pantoate with beta-alanine in an ATP-dependent reaction via a pantoyl-adenylate intermediate. This chain is Pantothenate synthetase, found in Shewanella loihica (strain ATCC BAA-1088 / PV-4).